Here is a 402-residue protein sequence, read N- to C-terminus: mRNA-capping enzyme subunit alpha (402 aa).

Catalysis depends on lysine 66, which acts as the N6-GMP-lysine intermediate.

It belongs to the eukaryotic GTase family. In terms of assembly, heterodimer. The mRNA-capping enzyme is composed of two separate chains alpha and beta, respectively a mRNA guanylyltransferase and an mRNA 5'-triphosphate monophosphatase.

It localises to the nucleus. It carries out the reaction a 5'-end diphospho-ribonucleoside in mRNA + GTP + H(+) = a 5'-end (5'-triphosphoguanosine)-ribonucleoside in mRNA + diphosphate. Second step of mRNA capping. Transfer of the GMP moiety of GTP to the 5'-end of RNA via an enzyme-GMP covalent reaction intermediate. This chain is mRNA-capping enzyme subunit alpha (rnp-2), found in Neurospora crassa (strain ATCC 24698 / 74-OR23-1A / CBS 708.71 / DSM 1257 / FGSC 987).